We begin with the raw amino-acid sequence, 335 residues long: Acetyl-coenzyme A carboxylase carboxyl transferase subunit alpha (335 aa).

A CoA carboxyltransferase C-terminal domain is found at 40-294 (QLETLAARRR…KEAIEKHLNA (255 aa)).

It belongs to the AccA family. Acetyl-CoA carboxylase is a heterohexamer composed of biotin carboxyl carrier protein (AccB), biotin carboxylase (AccC) and two subunits each of ACCase subunit alpha (AccA) and ACCase subunit beta (AccD).

The protein resides in the cytoplasm. It catalyses the reaction N(6)-carboxybiotinyl-L-lysyl-[protein] + acetyl-CoA = N(6)-biotinyl-L-lysyl-[protein] + malonyl-CoA. It functions in the pathway lipid metabolism; malonyl-CoA biosynthesis; malonyl-CoA from acetyl-CoA: step 1/1. Component of the acetyl coenzyme A carboxylase (ACC) complex. First, biotin carboxylase catalyzes the carboxylation of biotin on its carrier protein (BCCP) and then the CO(2) group is transferred by the carboxyltransferase to acetyl-CoA to form malonyl-CoA. The polypeptide is Acetyl-coenzyme A carboxylase carboxyl transferase subunit alpha (Prochlorococcus marinus (strain AS9601)).